Reading from the N-terminus, the 239-residue chain is Guanylate kinase (239 aa).

In terms of domain architecture, Guanylate kinase-like spans Gly-55–Leu-235. Gly-62–Ser-69 is an ATP binding site.

This sequence belongs to the guanylate kinase family.

It localises to the cytoplasm. It carries out the reaction GMP + ATP = GDP + ADP. In terms of biological role, essential for recycling GMP and indirectly, cGMP. This Mycoplasma pneumoniae (strain ATCC 29342 / M129 / Subtype 1) (Mycoplasmoides pneumoniae) protein is Guanylate kinase (gmk).